The sequence spans 572 residues: Glutathione hydrolase 5 proenzyme (572 aa).

Residues 1-6 are Cytoplasmic-facing; sequence MAWGHR. Residues 7-29 traverse the membrane as a helical; Signal-anchor for type II membrane protein segment; that stretch reads TTVCLVLLGVSLGLAIIVLAVVL. Topologically, residues 30 to 572 are extracellular; sequence PHHQASCRPD…LRKAGKASGY (543 aa). An N-linked (GlcNAc...) asparagine glycan is attached at N98. R110 contacts L-glutamate. N-linked (GlcNAc...) asparagine glycans are attached at residues N185, N194, N204, N277, N303, N347, and N377. T388 acts as the Nucleophile in catalysis. Residues T406, E427, and 453–454 contribute to the L-glutamate site; that span reads SS.

It belongs to the gamma-glutamyltransferase family. Heterodimer composed of the light and heavy chains. The active site is located in the light chain. Cleaved by autocatalysis into a large and a small subunit. In terms of processing, glycosylated. Widely expressed, but at low level, except in the airway epithelial cells. Detected in brain, heart, kidney, liver, lung, spleen, testis and trachea.

It is found in the membrane. The enzyme catalyses glutathione + H2O = L-cysteinylglycine + L-glutamate. The catalysed reaction is an S-substituted glutathione + H2O = an S-substituted L-cysteinylglycine + L-glutamate. It catalyses the reaction leukotriene C4 + H2O = leukotriene D4 + L-glutamate. It carries out the reaction S-[(2E,6E,10E)-geranylgeranyl]-L-glutathione + H2O = S-[(2E,6E,10E)-geranylgeranyl]-L-cysteinylglycine + L-glutamate. The enzyme catalyses an N-terminal (5-L-glutamyl)-[peptide] + an alpha-amino acid = 5-L-glutamyl amino acid + an N-terminal L-alpha-aminoacyl-[peptide]. It functions in the pathway lipid metabolism; leukotriene D4 biosynthesis. The protein operates within sulfur metabolism; glutathione metabolism. Inhibited by serine-borate. In terms of biological role, cleaves the gamma-glutamyl bond of extracellular glutathione tripeptide (gamma-Glu-Cys-Gly) and certain glutathione conjugates. Hydrolyzes glutathione releasing L-Glu and Cys-Gly dipeptide which is further metabolized to maintain extracellular cysteine levels but also to provide cysteine necessary for intracellular glutathione synthesis. Among glutathione-S-conjugates metabolizes leukotriene C4 (LTC4) and S-geranylgeranyl-glutathione (GGG), but is inactive toward gamma-glutamyl leucine. Converts extracellular LTC4 to LTD4 during acute inflammatory response. Acts as a negative regulator of GGG bioactivity. GGT5 (via GGG catabolism) and ABCC1 (via extracellular transport) establish GGG gradients within lymphoid tissues to position P2RY8-positive lymphocytes at germinal centers in lymphoid follicles and restrict their chemotactic transmigration from blood vessels to bone marrow parenchyma. The transpeptidation reaction, i.e. the transfer of gamma-glutamyl moiety to an acceptor molecule to yield a new gamma-glutamyl compound requires high concentration of dipeptide acceptor and is considered nonphysiological. The protein is Glutathione hydrolase 5 proenzyme (Ggt5) of Rattus norvegicus (Rat).